A 204-amino-acid polypeptide reads, in one-letter code: Cytochrome c oxidase subunit 3 (204 aa).

5 helical membrane passes run 12 to 32 (YGNL…IQWW), 56 to 76 (GMML…WAYF), 101 to 121 (FQIP…VTWA), 133 to 153 (AIHS…LQMM), and 171 to 191 (FFVA…FLFM).

Belongs to the cytochrome c oxidase subunit 3 family. As to quaternary structure, component of the cytochrome c oxidase (complex IV, CIV), a multisubunit enzyme composed of a catalytic core of 3 subunits and several supernumerary subunits. The complex exists as a monomer or a dimer and forms supercomplexes (SCs) in the inner mitochondrial membrane with ubiquinol-cytochrome c oxidoreductase (cytochrome b-c1 complex, complex III, CIII).

Its subcellular location is the mitochondrion inner membrane. It catalyses the reaction 4 Fe(II)-[cytochrome c] + O2 + 8 H(+)(in) = 4 Fe(III)-[cytochrome c] + 2 H2O + 4 H(+)(out). Functionally, component of the cytochrome c oxidase, the last enzyme in the mitochondrial electron transport chain which drives oxidative phosphorylation. The respiratory chain contains 3 multisubunit complexes succinate dehydrogenase (complex II, CII), ubiquinol-cytochrome c oxidoreductase (cytochrome b-c1 complex, complex III, CIII) and cytochrome c oxidase (complex IV, CIV), that cooperate to transfer electrons derived from NADH and succinate to molecular oxygen, creating an electrochemical gradient over the inner membrane that drives transmembrane transport and the ATP synthase. Cytochrome c oxidase is the component of the respiratory chain that catalyzes the reduction of oxygen to water. Electrons originating from reduced cytochrome c in the intermembrane space (IMS) are transferred via the dinuclear copper A center (CU(A)) of subunit 2 and heme A of subunit 1 to the active site in subunit 1, a binuclear center (BNC) formed by heme A3 and copper B (CU(B)). The BNC reduces molecular oxygen to 2 water molecules using 4 electrons from cytochrome c in the IMS and 4 protons from the mitochondrial matrix. The protein is Cytochrome c oxidase subunit 3 (COIII) of Enteroctopus dofleini (North Pacific giant octopus).